The primary structure comprises 29 residues: Ceratotoxin-B (29 aa).

Homomer of four to six subunits.

Its subcellular location is the secreted. Its function is as follows. Female-specific peptides with potent activity against Gram-positive and Gram-negative bacteria. They have as well hemolytic activity. The polypeptide is Ceratotoxin-B (CTXB) (Ceratitis capitata (Mediterranean fruit fly)).